We begin with the raw amino-acid sequence, 316 residues long: tRNA dimethylallyltransferase (316 aa).

15-22 (GPTASGKS) lines the ATP pocket. Residue 17–22 (TASGKS) participates in substrate binding. The interval 40 to 43 (DSRQ) is interaction with substrate tRNA.

It belongs to the IPP transferase family. As to quaternary structure, monomer. The cofactor is Mg(2+).

The catalysed reaction is adenosine(37) in tRNA + dimethylallyl diphosphate = N(6)-dimethylallyladenosine(37) in tRNA + diphosphate. Catalyzes the transfer of a dimethylallyl group onto the adenine at position 37 in tRNAs that read codons beginning with uridine, leading to the formation of N6-(dimethylallyl)adenosine (i(6)A). This is tRNA dimethylallyltransferase from Chlorobium limicola (strain DSM 245 / NBRC 103803 / 6330).